Reading from the N-terminus, the 152-residue chain is SKP1-like protein 11 (152 aa).

The interaction with the F-box domain of F-box proteins stretch occupies residues 94-152 (ILAANYLNIKSLLDLTCQTVADMIKGKTPEEIRSTFNIENDFTPEEEEAVRKENQWAFE).

The protein belongs to the SKP1 family. As to quaternary structure, part of a SCF (SKP1-cullin-F-box) protein ligase complex. Interacts with ADO3/FKF1, COI1/FBL2, EBF1/FBL6, PP2A13, PP2B10, UFO, SKIP2, SKIP15, SKIP16, SKIP32, CPR1/CPR30, At1g55000, At1g67340, At1g78100, At3g04660, At3g16740, At3g61590, At4g38940 and At5g49610. As to expression, expressed in young seedlings, cotyledons, roots, leaves, floral stems, inflorescences, pollen, and siliques, with a slightly higher level in inflorescence than in other tissues.

The protein localises to the nucleus. Its pathway is protein modification; protein ubiquitination. Its function is as follows. Involved in ubiquitination and subsequent proteasomal degradation of target proteins. Together with CUL1, RBX1 and a F-box protein, it forms a SCF E3 ubiquitin ligase complex. The functional specificity of this complex depends on the type of F-box protein. In the SCF complex, it serves as an adapter that links the F-box protein to CUL1. Plays a role during early flowers reproductive development. The sequence is that of SKP1-like protein 11 (ASK11) from Arabidopsis thaliana (Mouse-ear cress).